The following is a 1103-amino-acid chain: PH, RCC1 and FYVE domains-containing protein 1 (1103 aa).

The PH domain occupies Lys22–Ile123. The disordered stretch occupies residues Asp144–Asp233. Composition is skewed to low complexity over residues Ser151–Gly169 and Ser217–Ala231. 7 RCC1 repeats span residues Leu237–Arg298, Gln299–Leu351, Gly353–Ser406, Tyr407–Glu458, Ser471–Thr522, Gly524–Ser574, and Arg575–Leu626. An FYVE-type zinc finger spans residues Gly632–Ser694. Residues Cys638, Cys641, Cys654, Cys657, Cys662, Cys665, Cys686, and Cys689 each coordinate Zn(2+). A disordered region spans residues Ala783–Thr818. The segment covering Pro791 to Thr818 has biased composition (low complexity). Residues Ala828–Lys904 adopt a coiled-coil conformation. The segment covering Asn962–Ala979 has biased composition (polar residues). A disordered region spans residues Asn962 to Ser988. Residues Ala1023–Asn1078 enclose the BRX domain. Residues Val1079 to His1103 are disordered.

Mostly expressed in flowers, and, to a lower extent, in stems, leaves, siliques, seeds.

In terms of biological role, binds to phosphatidic acid and to phosphoinositides such as PtdIns3P, PtdIns(3,4)P(2), PtdIns(3,4,5)P(3) and PtdIns(4,5)P(2). Catalyzes guanine nucleotide exchange on specific Rab proteins. This chain is PH, RCC1 and FYVE domains-containing protein 1, found in Arabidopsis thaliana (Mouse-ear cress).